Reading from the N-terminus, the 232-residue chain is MVELPANLIKATFLSRPNRFTVVAAREGEKLVAFLADPGRLTELLLPGAEVYLAPASRQGDRKTAYDVVLLRQNGTFISLDSRLPNRLFAAALQAGSLEPFKGYRLRATEVRAGSSRLDFLLQGDGHPPCYVEVKSVTLVRGGLALFPDAPTARGSRHLRELMALHSRGYRAAAVFIIQREDAISLAPNEVTDPCFSSTIREAAAAGVEIYAYRCHIDPVTVSLIAPVMVKL.

The protein belongs to the SfsA family.

This is Sugar fermentation stimulation protein homolog from Moorella thermoacetica (strain ATCC 39073 / JCM 9320).